Consider the following 255-residue polypeptide: Thiazole synthase (255 aa).

Residue lysine 95 is the Schiff-base intermediate with DXP of the active site. 1-deoxy-D-xylulose 5-phosphate contacts are provided by residues glycine 156, 182–183 (AG), and 204–205 (NT).

The protein belongs to the ThiG family. Homotetramer. Forms heterodimers with either ThiH or ThiS.

It localises to the cytoplasm. It carries out the reaction [ThiS sulfur-carrier protein]-C-terminal-Gly-aminoethanethioate + 2-iminoacetate + 1-deoxy-D-xylulose 5-phosphate = [ThiS sulfur-carrier protein]-C-terminal Gly-Gly + 2-[(2R,5Z)-2-carboxy-4-methylthiazol-5(2H)-ylidene]ethyl phosphate + 2 H2O + H(+). It participates in cofactor biosynthesis; thiamine diphosphate biosynthesis. Functionally, catalyzes the rearrangement of 1-deoxy-D-xylulose 5-phosphate (DXP) to produce the thiazole phosphate moiety of thiamine. Sulfur is provided by the thiocarboxylate moiety of the carrier protein ThiS. In vitro, sulfur can be provided by H(2)S. In Aeromonas salmonicida (strain A449), this protein is Thiazole synthase.